The primary structure comprises 157 residues: 2-C-methyl-D-erythritol 2,4-cyclodiphosphate synthase (157 aa).

A divalent metal cation is bound by residues Asp8 and His10. Residues 8–10 and 34–35 each bind 4-CDP-2-C-methyl-D-erythritol 2-phosphate; these read DVH and HS. Residue His42 coordinates a divalent metal cation. 4-CDP-2-C-methyl-D-erythritol 2-phosphate-binding positions include 56–58, 61–65, 100–106, 132–135, Phe139, and Arg142; these read DIG, FPDTD, AQAPKMA, and TTTE.

This sequence belongs to the IspF family. In terms of assembly, homotrimer. A divalent metal cation is required as a cofactor.

The catalysed reaction is 4-CDP-2-C-methyl-D-erythritol 2-phosphate = 2-C-methyl-D-erythritol 2,4-cyclic diphosphate + CMP. It participates in isoprenoid biosynthesis; isopentenyl diphosphate biosynthesis via DXP pathway; isopentenyl diphosphate from 1-deoxy-D-xylulose 5-phosphate: step 4/6. Involved in the biosynthesis of isopentenyl diphosphate (IPP) and dimethylallyl diphosphate (DMAPP), two major building blocks of isoprenoid compounds. Catalyzes the conversion of 4-diphosphocytidyl-2-C-methyl-D-erythritol 2-phosphate (CDP-ME2P) to 2-C-methyl-D-erythritol 2,4-cyclodiphosphate (ME-CPP) with a corresponding release of cytidine 5-monophosphate (CMP). In Pseudomonas savastanoi pv. phaseolicola (strain 1448A / Race 6) (Pseudomonas syringae pv. phaseolicola (strain 1448A / Race 6)), this protein is 2-C-methyl-D-erythritol 2,4-cyclodiphosphate synthase.